A 266-amino-acid polypeptide reads, in one-letter code: 3-methyl-2-oxobutanoate hydroxymethyltransferase (266 aa).

2 residues coordinate Mg(2+): aspartate 45 and aspartate 84. 3-methyl-2-oxobutanoate is bound by residues 45–46, aspartate 84, and lysine 112; that span reads DS. Glutamate 114 serves as a coordination point for Mg(2+). Residue glutamate 181 is the Proton acceptor of the active site.

The protein belongs to the PanB family. In terms of assembly, homodecamer; pentamer of dimers. The cofactor is Mg(2+).

The protein resides in the cytoplasm. The enzyme catalyses 3-methyl-2-oxobutanoate + (6R)-5,10-methylene-5,6,7,8-tetrahydrofolate + H2O = 2-dehydropantoate + (6S)-5,6,7,8-tetrahydrofolate. The protein operates within cofactor biosynthesis; (R)-pantothenate biosynthesis; (R)-pantoate from 3-methyl-2-oxobutanoate: step 1/2. Catalyzes the reversible reaction in which hydroxymethyl group from 5,10-methylenetetrahydrofolate is transferred onto alpha-ketoisovalerate to form ketopantoate. The sequence is that of 3-methyl-2-oxobutanoate hydroxymethyltransferase from Pseudomonas savastanoi pv. phaseolicola (strain 1448A / Race 6) (Pseudomonas syringae pv. phaseolicola (strain 1448A / Race 6)).